Here is a 221-residue protein sequence, read N- to C-terminus: Cytidylate kinase (221 aa).

Position 11 to 19 (11 to 19) interacts with ATP; that stretch reads GPCGAGKST.

This sequence belongs to the cytidylate kinase family. Type 1 subfamily.

Its subcellular location is the cytoplasm. It catalyses the reaction CMP + ATP = CDP + ADP. The enzyme catalyses dCMP + ATP = dCDP + ADP. This chain is Cytidylate kinase, found in Mycoplasmopsis agalactiae (strain NCTC 10123 / CIP 59.7 / PG2) (Mycoplasma agalactiae).